Here is a 273-residue protein sequence, read N- to C-terminus: Endoplasmic reticulum resident protein 27 (273 aa).

An N-terminal signal peptide occupies residues Met1–Ala25. Residues Glu39 to Val152 enclose the Thioredoxin domain. The N-linked (GlcNAc...) asparagine glycan is linked to Asn100. Positions Asp230 to Asp233 are PDIA3-binding site. The short motif at Lys270–Leu273 is the Prevents secretion from ER element.

The protein belongs to the protein disulfide isomerase family. As to quaternary structure, interacts with PDIA3.

It is found in the endoplasmic reticulum lumen. In terms of biological role, specifically binds unfolded proteins and may recruit protein disulfide isomerase PDIA3 to unfolded substrates. Binds protein substrates via a hydrophobic pocket in the C-terminal domain. May play a role in the unfolded stress response. This chain is Endoplasmic reticulum resident protein 27 (ERP27), found in Homo sapiens (Human).